Here is a 428-residue protein sequence, read N- to C-terminus: Stromal membrane-associated protein 2 (428 aa).

In terms of domain architecture, Arf-GAP spans 13–139 (QAVLGSLLSE…INTFRKEKDD (127 aa)). Residues 28-51 (CADCQAKGPRWASWNIGVFICIRC) form a C4-type zinc finger. Residues 161–172 (VKMPQKKEETQQ) are compositionally biased toward basic and acidic residues. 2 disordered regions span residues 161–182 (VKMP…KSTE) and 222–258 (SRKV…AGKK).

In terms of assembly, may interact with clathrin heavy chains.

In terms of biological role, GTPase activating protein. May play a role in clathrin-dependent retrograde transport from early endosomes to the trans-Golgi network. This is Stromal membrane-associated protein 2 (SMAP2) from Gallus gallus (Chicken).